We begin with the raw amino-acid sequence, 407 residues long: Imidazolonepropionase (407 aa).

The Fe(3+) site is built by H73 and H75. The Zn(2+) site is built by H73 and H75. Residues R82, Y145, and H178 each coordinate 4-imidazolone-5-propanoate. Y145 contacts N-formimidoyl-L-glutamate. H243 contacts Fe(3+). H243 lines the Zn(2+) pocket. Q246 lines the 4-imidazolone-5-propanoate pocket. D318 contributes to the Fe(3+) binding site. A Zn(2+)-binding site is contributed by D318. N320 and G322 together coordinate N-formimidoyl-L-glutamate. Residue T323 coordinates 4-imidazolone-5-propanoate.

This sequence belongs to the metallo-dependent hydrolases superfamily. HutI family. Zn(2+) is required as a cofactor. It depends on Fe(3+) as a cofactor.

It localises to the cytoplasm. It carries out the reaction 4-imidazolone-5-propanoate + H2O = N-formimidoyl-L-glutamate. It participates in amino-acid degradation; L-histidine degradation into L-glutamate; N-formimidoyl-L-glutamate from L-histidine: step 3/3. Its function is as follows. Catalyzes the hydrolytic cleavage of the carbon-nitrogen bond in imidazolone-5-propanoate to yield N-formimidoyl-L-glutamate. It is the third step in the universal histidine degradation pathway. This Serratia proteamaculans (strain 568) protein is Imidazolonepropionase.